The primary structure comprises 2694 residues: Neurobeachin-like protein 1 (2694 aa).

Disordered stretches follow at residues Val1289–Glu1314, Ser1330–Val1350, and Cys1381–Ser1411. Over residues Leu1290–Glu1314 the composition is skewed to basic and acidic residues. Residues Met1383–Val1409 show a composition bias toward polar residues. The region spanning Asp1883 to Leu1980 is the BEACH-type PH domain. In terms of domain architecture, BEACH spans Arg1992–Arg2284. 2 WD repeats span residues Arg2439–Val2478 and Gly2490–Arg2531.

This sequence belongs to the WD repeat neurobeachin family. In terms of tissue distribution, highly expressed in brain, kidney, prostate and testis. Weakly expressed in ovary, small intestine, colon and peripheral blood leukocytes. May be correlative to several tumors, such as ovary serous adenocarcinoma and metastasis mammary gland carcinoma breast.

This chain is Neurobeachin-like protein 1 (NBEAL1), found in Homo sapiens (Human).